A 367-amino-acid polypeptide reads, in one-letter code: Aminomethyltransferase (367 aa).

The protein belongs to the GcvT family. As to quaternary structure, the glycine cleavage system is composed of four proteins: P, T, L and H.

It carries out the reaction N(6)-[(R)-S(8)-aminomethyldihydrolipoyl]-L-lysyl-[protein] + (6S)-5,6,7,8-tetrahydrofolate = N(6)-[(R)-dihydrolipoyl]-L-lysyl-[protein] + (6R)-5,10-methylene-5,6,7,8-tetrahydrofolate + NH4(+). The glycine cleavage system catalyzes the degradation of glycine. This is Aminomethyltransferase from Mycolicibacterium paratuberculosis (strain ATCC BAA-968 / K-10) (Mycobacterium paratuberculosis).